A 527-amino-acid polypeptide reads, in one-letter code: Probable T-complex protein 1 subunit beta (527 aa).

Belongs to the TCP-1 chaperonin family. As to quaternary structure, heterooligomeric complex of about 850 to 900 kDa that forms two stacked rings, 12 to 16 nm in diameter.

It is found in the cytoplasm. Molecular chaperone; assists the folding of proteins upon ATP hydrolysis. Known to play a role, in vitro, in the folding of actin and tubulin. The sequence is that of Probable T-complex protein 1 subunit beta (cct2) from Schizosaccharomyces pombe (strain 972 / ATCC 24843) (Fission yeast).